The primary structure comprises 276 residues: Diaminopimelate epimerase (276 aa).

Residues Asn13, Gln46, and Asn66 each coordinate substrate. Residue Cys75 is the Proton donor of the active site. Substrate contacts are provided by residues 76–77 (GN), Asn159, Asn192, and 210–211 (ER). Cys219 acts as the Proton acceptor in catalysis. Substrate is bound at residue 220–221 (GT).

This sequence belongs to the diaminopimelate epimerase family. Homodimer.

It localises to the cytoplasm. The catalysed reaction is (2S,6S)-2,6-diaminopimelate = meso-2,6-diaminopimelate. Its pathway is amino-acid biosynthesis; L-lysine biosynthesis via DAP pathway; DL-2,6-diaminopimelate from LL-2,6-diaminopimelate: step 1/1. Catalyzes the stereoinversion of LL-2,6-diaminopimelate (L,L-DAP) to meso-diaminopimelate (meso-DAP), a precursor of L-lysine and an essential component of the bacterial peptidoglycan. The chain is Diaminopimelate epimerase from Stutzerimonas stutzeri (strain A1501) (Pseudomonas stutzeri).